The following is a 438-amino-acid chain: GDP-mannose 6-dehydrogenase (438 aa).

The NAD(+) site is built by tyrosine 10, valine 11, aspartate 30, lysine 35, threonine 86, and threonine 124. Glutamate 161, lysine 210, asparagine 214, histidine 217, asparagine 225, tyrosine 256, tyrosine 257, arginine 259, phenylalanine 262, and glycine 265 together coordinate GDP-alpha-D-mannuronate. The active site involves cysteine 268. Lysine 271 is a binding site for NAD(+). Lysine 324 is a GDP-alpha-D-mannuronate binding site. Residue arginine 331 participates in NAD(+) binding.

Belongs to the UDP-glucose/GDP-mannose dehydrogenase family.

The catalysed reaction is GDP-alpha-D-mannose + 2 NAD(+) + H2O = GDP-alpha-D-mannuronate + 2 NADH + 3 H(+). It participates in glycan biosynthesis; alginate biosynthesis. In terms of biological role, catalyzes the oxidation of guanosine diphospho-D-mannose (GDP-D-mannose) to GDP-D-mannuronic acid, a precursor for alginate polymerization. The alginate layer causes a mucoid phenotype and provides a protective barrier against host immune defenses and antibiotics. In Pseudomonas savastanoi pv. phaseolicola (Pseudomonas syringae pv. phaseolicola), this protein is GDP-mannose 6-dehydrogenase (algD).